We begin with the raw amino-acid sequence, 215 residues long: NAD(P)H-quinone oxidoreductase subunit I (215 aa).

2 consecutive 4Fe-4S ferredoxin-type domains span residues 55 to 84 and 95 to 124; these read GRIHYEFDKCIACEVCVRVCPINLPVVDWV and RNYSIDFGVCIFCGNCVEYCPTNCLSMTEE. Cys64, Cys67, Cys70, Cys74, Cys104, Cys107, Cys110, and Cys114 together coordinate [4Fe-4S] cluster. Residues 169 to 180 show a composition bias toward basic and acidic residues; sequence MDPHGVASDRPR. A disordered region spans residues 169-215; sequence MDPHGVASDRPRAGQLPAQVLETLTPPAKPTAKNDGQSSSEAKEGDA.

It belongs to the complex I 23 kDa subunit family. In terms of assembly, NDH-1 is composed of at least 11 different subunits. [4Fe-4S] cluster is required as a cofactor.

It is found in the cellular thylakoid membrane. The enzyme catalyses a plastoquinone + NADH + (n+1) H(+)(in) = a plastoquinol + NAD(+) + n H(+)(out). It carries out the reaction a plastoquinone + NADPH + (n+1) H(+)(in) = a plastoquinol + NADP(+) + n H(+)(out). Functionally, NDH-1 shuttles electrons from an unknown electron donor, via FMN and iron-sulfur (Fe-S) centers, to quinones in the respiratory and/or the photosynthetic chain. The immediate electron acceptor for the enzyme in this species is believed to be plastoquinone. Couples the redox reaction to proton translocation, and thus conserves the redox energy in a proton gradient. In Synechococcus sp. (strain CC9605), this protein is NAD(P)H-quinone oxidoreductase subunit I.